Consider the following 88-residue polypeptide: Small ribosomal subunit protein bS16 (88 aa).

The protein belongs to the bacterial ribosomal protein bS16 family.

The protein is Small ribosomal subunit protein bS16 of Syntrophomonas wolfei subsp. wolfei (strain DSM 2245B / Goettingen).